We begin with the raw amino-acid sequence, 476 residues long: Eukaryotic translation initiation factor 3 subunit L (476 aa).

One can recognise a PCI domain in the interval 257-452 (DAIRMFSHIL…DLDYALENDL (196 aa)).

This sequence belongs to the eIF-3 subunit L family. Component of the eukaryotic translation initiation factor 3 (eIF-3) complex.

The protein resides in the cytoplasm. In terms of biological role, component of the eukaryotic translation initiation factor 3 (eIF-3) complex, which is involved in protein synthesis of a specialized repertoire of mRNAs and, together with other initiation factors, stimulates binding of mRNA and methionyl-tRNAi to the 40S ribosome. The eIF-3 complex specifically targets and initiates translation of a subset of mRNAs involved in cell proliferation. The sequence is that of Eukaryotic translation initiation factor 3 subunit L from Aspergillus oryzae (strain ATCC 42149 / RIB 40) (Yellow koji mold).